The sequence spans 336 residues: Anthranilate phosphoribosyltransferase (336 aa).

5-phospho-alpha-D-ribose 1-diphosphate is bound by residues Gly-81, 84-85, Ser-89, 91-94, 109-117, and Ala-121; these read GD, NIST, and KHGNRGLSS. Gly-81 serves as a coordination point for anthranilate. Ser-93 contributes to the Mg(2+) binding site. Residue Asn-112 participates in anthranilate binding. Arg-167 contacts anthranilate. 2 residues coordinate Mg(2+): Asp-225 and Glu-226.

It belongs to the anthranilate phosphoribosyltransferase family. In terms of assembly, homodimer. The cofactor is Mg(2+).

It catalyses the reaction N-(5-phospho-beta-D-ribosyl)anthranilate + diphosphate = 5-phospho-alpha-D-ribose 1-diphosphate + anthranilate. It participates in amino-acid biosynthesis; L-tryptophan biosynthesis; L-tryptophan from chorismate: step 2/5. Catalyzes the transfer of the phosphoribosyl group of 5-phosphorylribose-1-pyrophosphate (PRPP) to anthranilate to yield N-(5'-phosphoribosyl)-anthranilate (PRA). This is Anthranilate phosphoribosyltransferase from Mesorhizobium japonicum (strain LMG 29417 / CECT 9101 / MAFF 303099) (Mesorhizobium loti (strain MAFF 303099)).